A 37-amino-acid chain; its full sequence is Diuretic hormone 1 (37 aa).

It belongs to the sauvagine/corticotropin-releasing factor/urotensin I family.

The protein localises to the secreted. Its function is as follows. Stimulates fluid secretion by the Malpighian tubules. Increases cyclic AMP production. The polypeptide is Diuretic hormone 1 (Tenebrio molitor (Yellow mealworm beetle)).